Consider the following 243-residue polypeptide: tRNA (guanine-N(7)-)-methyltransferase (243 aa).

Glu-74, Glu-99, Asp-126, and Asp-149 together coordinate S-adenosyl-L-methionine. Asp-149 is an active-site residue. Residues Lys-153, Asp-185, and 221–224 (TKFE) contribute to the substrate site.

This sequence belongs to the class I-like SAM-binding methyltransferase superfamily. TrmB family.

The enzyme catalyses guanosine(46) in tRNA + S-adenosyl-L-methionine = N(7)-methylguanosine(46) in tRNA + S-adenosyl-L-homocysteine. The protein operates within tRNA modification; N(7)-methylguanine-tRNA biosynthesis. In terms of biological role, catalyzes the formation of N(7)-methylguanine at position 46 (m7G46) in tRNA. The sequence is that of tRNA (guanine-N(7)-)-methyltransferase from Psychromonas ingrahamii (strain DSM 17664 / CCUG 51855 / 37).